The chain runs to 181 residues: MARRPHNAPPQRETGPRVNERIRCPEVRLIGANGENIGVVTPSRAMMMAEEAGLDLVEISPNAEPPVCKIMDFGKFKYEQQKREAEARKKQHIIEIKEIKFRPGTDTHDYDVKMRSVLKFLSEGDKVKVTLRFRGREMAHQELGLELLNRVAAHVSEAEAGKVEAMPKLEGRQMVMMIAPK.

This sequence belongs to the IF-3 family. As to quaternary structure, monomer.

The protein localises to the cytoplasm. IF-3 binds to the 30S ribosomal subunit and shifts the equilibrium between 70S ribosomes and their 50S and 30S subunits in favor of the free subunits, thus enhancing the availability of 30S subunits on which protein synthesis initiation begins. In Cereibacter sphaeroides (strain ATCC 17023 / DSM 158 / JCM 6121 / CCUG 31486 / LMG 2827 / NBRC 12203 / NCIMB 8253 / ATH 2.4.1.) (Rhodobacter sphaeroides), this protein is Translation initiation factor IF-3.